A 431-amino-acid polypeptide reads, in one-letter code: Adenylosuccinate lyase (431 aa).

N(6)-(1,2-dicarboxyethyl)-AMP is bound by residues 4–5 (RY), 67–69 (RHD), and 93–94 (TS). His-141 functions as the Proton donor/acceptor in the catalytic mechanism. N(6)-(1,2-dicarboxyethyl)-AMP is bound at residue Gln-212. Ser-262 acts as the Proton donor/acceptor in catalysis. Residues Ser-263, 268–270 (KRN), and 307–311 (SVERV) contribute to the N(6)-(1,2-dicarboxyethyl)-AMP site.

The protein belongs to the lyase 1 family. Adenylosuccinate lyase subfamily. As to quaternary structure, homooligomer. Residues from neighboring subunits contribute catalytic and substrate-binding residues to each active site.

It catalyses the reaction N(6)-(1,2-dicarboxyethyl)-AMP = fumarate + AMP. The enzyme catalyses (2S)-2-[5-amino-1-(5-phospho-beta-D-ribosyl)imidazole-4-carboxamido]succinate = 5-amino-1-(5-phospho-beta-D-ribosyl)imidazole-4-carboxamide + fumarate. Its pathway is purine metabolism; AMP biosynthesis via de novo pathway; AMP from IMP: step 2/2. The protein operates within purine metabolism; IMP biosynthesis via de novo pathway; 5-amino-1-(5-phospho-D-ribosyl)imidazole-4-carboxamide from 5-amino-1-(5-phospho-D-ribosyl)imidazole-4-carboxylate: step 2/2. Functionally, catalyzes two reactions in de novo purine nucleotide biosynthesis. Catalyzes the breakdown of 5-aminoimidazole- (N-succinylocarboxamide) ribotide (SAICAR or 2-[5-amino-1-(5-phospho-beta-D-ribosyl)imidazole-4-carboxamido]succinate) to 5-aminoimidazole-4-carboxamide ribotide (AICAR or 5-amino-1-(5-phospho-beta-D-ribosyl)imidazole-4-carboxamide) and fumarate, and of adenylosuccinate (ADS or N(6)-(1,2-dicarboxyethyl)-AMP) to adenosine monophosphate (AMP) and fumarate. This chain is Adenylosuccinate lyase (purB), found in Synechocystis sp. (strain ATCC 27184 / PCC 6803 / Kazusa).